The following is a 405-amino-acid chain: L-rhamnonate dehydratase (405 aa).

Positions 33 and 59 each coordinate substrate. Aspartate 226, glutamate 252, and glutamate 280 together coordinate Mg(2+). The active-site Proton acceptor is the histidine 329. Position 349 (glutamate 349) interacts with substrate.

It belongs to the mandelate racemase/muconate lactonizing enzyme family. RhamD subfamily. In terms of assembly, homooctamer; tetramer of dimers. Mg(2+) is required as a cofactor.

It catalyses the reaction L-rhamnonate = 2-dehydro-3-deoxy-L-rhamnonate + H2O. Catalyzes the dehydration of L-rhamnonate to 2-keto-3-deoxy-L-rhamnonate (KDR). This chain is L-rhamnonate dehydratase, found in Escherichia coli O45:K1 (strain S88 / ExPEC).